A 594-amino-acid polypeptide reads, in one-letter code: MAAAAVVAATVPVQSMGADGASSVHWFRKGLRLHDNPALLAAVRGARCVRCVYILDPWFAASSSVGINRWRFLLQSLEDLDTSLRKLNSRLFVVRGQPADVFPRLFKEWGVTRLTFEYDSEPFGKERDAAIMKMAKEAGVEVVTENSHTLYDLDRIIELNGQKPPLTYKRFQALISRMELPKKPVGAVSSQHMENCRAEIQENHDDTYGVPSLEELGFPTEGLGPAVWQGGETEALVRLDKHLERKAWVANYERPRMNANSLLASPTGLSPYLRFGCLSCRLFYYRLWDLYRKVKRNSTPPLSLFGQLLWREFFYTAATNNPRFDRMEGNPICIQIPWDRNPEALAKWAEGKTGFPWIDAIMTQLRQEGWIHHLARHAVACFLTRGDLWVSWESGVRVFDELLLDADFSVNAGSWMWLSCSAFFQQFFHCYCPVGFGRRTDPSGDYIRRYLPKLKGFPSRYIYEPWNAPESVQKAANCIIGVDYPRPIVNHAETSRLNIERMKQIYQQLSRYRGLCLWASVPSCVEDLSHPVAEPGSSQAGSISNTGPRPLSSGPASPKRKLEAAEEPPGEELSKRARVTVTQMPAQEPPSKDS.

A Photolyase/cryptochrome alpha/beta domain is found at 21-150 (ASSVHWFRKG…EVVTENSHTL (130 aa)). A Glycyl lysine isopeptide (Lys-Gly) (interchain with G-Cter in ubiquitin) cross-link involves residue Lys-29. At Ser-89 the chain carries Phosphoserine. Residues Lys-125 and Lys-241 each participate in a glycyl lysine isopeptide (Lys-Gly) (interchain with G-Cter in ubiquitin) cross-link. Ser-265 carries the phosphoserine; by MAPK modification. Ser-270 serves as a coordination point for FAD. Ser-298 carries the post-translational modification Phosphoserine. Gln-307 contributes to the FAD binding site. Lys-347 participates in a covalent cross-link: Glycyl lysine isopeptide (Lys-Gly) (interchain with G-Cter in ubiquitin). FAD-binding positions include His-373 and 405–407 (DAD). The tract at residues 389–488 (WVSWESGVRV…IIGVDYPRPI (100 aa)) is required for inhibition of CLOCK-BMAL1-mediated transcription. Residues Lys-474 and Lys-503 each participate in a glycyl lysine isopeptide (Lys-Gly) (interchain with G-Cter in ubiquitin) cross-link. Residues 532–594 (VAEPGSSQAG…PAQEPPSKDS (63 aa)) form a disordered region. A compositionally biased stretch (polar residues) spans 536–547 (GSSQAGSISNTG). Position 553 is a phosphoserine; by GSK3-beta (Ser-553). At Ser-557 the chain carries Phosphoserine; by DYRK1A and MAPK.

Belongs to the DNA photolyase class-1 family. As to quaternary structure, component of the circadian core oscillator, which includes the CRY proteins, CLOCK or NPAS2, BMAL1 or BMAL2, CSNK1D and/or CSNK1E, TIMELESS, and the PER proteins. Interacts with TIMELESS. Interacts directly with PER1, PER2 and PER3; interaction with PER2 inhibits its ubiquitination and vice versa. Interacts with CLOCK-BMAL1. Interacts with CLOCK. Interacts with BMAL1. Interacts with NFIL3. Interacts with FBXL3 and FBXL21. FBXL3, PER2 and the cofactor FAD compete for overlapping binding sites. FBXL3 cannot bind CRY2 that interacts already with PER2 or that contains bound FAD. Interacts with PPP5C (via TPR repeats); the interaction down-regulates the PPP5C phosphatase activity on CSNK1E. Interacts with nuclear receptors AR and NR3C1/GR; the interaction is ligand dependent. Interacts with PRKDC and CIART. Interacts with DDB1, USP7 and TARDBP. Interacts with HNF4A and PPARA. Interacts with PPARD (via domain NR LBD) and NR1I2 (via domain NR LBD) in a ligand-dependent manner. Interacts with PPARG, NR1I3 and VDR in a ligand-dependent manner. The cofactor is FAD. Requires (6R)-5,10-methylene-5,6,7,8-tetrahydrofolate as cofactor. Phosphorylation on Ser-265 by MAPK is important for the inhibition of CLOCK-BMAL1-mediated transcriptional activity. Phosphorylation by CSKNe requires interaction with PER1 or PER2. Phosphorylated in a circadian manner at Ser-553 and Ser-557 in the suprachiasmatic nucleus (SCN) and liver. Phosphorylation at Ser-557 by DYRK1A promotes subsequent phosphorylation at Ser-553 by GSK3-beta: the two-step phosphorylation at the neighboring Ser residues leads to its proteasomal degradation. In terms of processing, ubiquitinated by the SCF(FBXL3) and SCF(FBXL21) complexes, regulating the balance between degradation and stabilization. The SCF(FBXL3) complex is mainly nuclear and mediates ubiquitination and subsequent degradation of CRY2. In contrast, cytoplasmic SCF(FBXL21) complex-mediated ubiquitination leads to stabilize CRY2 and counteract the activity of the SCF(FBXL3) complex. The SCF(FBXL3) and SCF(FBXL21) complexes probably mediate ubiquitination at different Lys residues. The SCF(FBXL3) complex recognizes and binds CRY2 phosphorylated at Ser-553 and Ser-557. Ubiquitination may be inhibited by PER2. Deubiquitinated by USP7. As to expression, expressed in all tissues examined including heart, cerebellum, cerebral cortex, lung, liver, muscle, kidney and ovary. Highest levels in heart, liver and ovary. Highly expressed in the suprachiasmatic nucleus (SCN).

It localises to the cytoplasm. The protein localises to the nucleus. Functionally, transcriptional repressor which forms a core component of the circadian clock. The circadian clock, an internal time-keeping system, regulates various physiological processes through the generation of approximately 24 hour circadian rhythms in gene expression, which are translated into rhythms in metabolism and behavior. It is derived from the Latin roots 'circa' (about) and 'diem' (day) and acts as an important regulator of a wide array of physiological functions including metabolism, sleep, body temperature, blood pressure, endocrine, immune, cardiovascular, and renal function. Consists of two major components: the central clock, residing in the suprachiasmatic nucleus (SCN) of the brain, and the peripheral clocks that are present in nearly every tissue and organ system. Both the central and peripheral clocks can be reset by environmental cues, also known as Zeitgebers (German for 'timegivers'). The predominant Zeitgeber for the central clock is light, which is sensed by retina and signals directly to the SCN. The central clock entrains the peripheral clocks through neuronal and hormonal signals, body temperature and feeding-related cues, aligning all clocks with the external light/dark cycle. Circadian rhythms allow an organism to achieve temporal homeostasis with its environment at the molecular level by regulating gene expression to create a peak of protein expression once every 24 hours to control when a particular physiological process is most active with respect to the solar day. Transcription and translation of core clock components (CLOCK, NPAS2, BMAL1, BMAL2, PER1, PER2, PER3, CRY1 and CRY2) plays a critical role in rhythm generation, whereas delays imposed by post-translational modifications (PTMs) are important for determining the period (tau) of the rhythms (tau refers to the period of a rhythm and is the length, in time, of one complete cycle). A diurnal rhythm is synchronized with the day/night cycle, while the ultradian and infradian rhythms have a period shorter and longer than 24 hours, respectively. Disruptions in the circadian rhythms contribute to the pathology of cardiovascular diseases, cancer, metabolic syndromes and aging. A transcription/translation feedback loop (TTFL) forms the core of the molecular circadian clock mechanism. Transcription factors, CLOCK or NPAS2 and BMAL1 or BMAL2, form the positive limb of the feedback loop, act in the form of a heterodimer and activate the transcription of core clock genes and clock-controlled genes (involved in key metabolic processes), harboring E-box elements (5'-CACGTG-3') within their promoters. The core clock genes: PER1/2/3 and CRY1/2 which are transcriptional repressors form the negative limb of the feedback loop and interact with the CLOCK|NPAS2-BMAL1|BMAL2 heterodimer inhibiting its activity and thereby negatively regulating their own expression. This heterodimer also activates nuclear receptors NR1D1/2 and RORA/B/G, which form a second feedback loop and which activate and repress BMAL1 transcription, respectively. CRY1 and CRY2 have redundant functions but also differential and selective contributions at least in defining the pace of the SCN circadian clock and its circadian transcriptional outputs. Less potent transcriptional repressor in cerebellum and liver than CRY1, though less effective in lengthening the period of the SCN oscillator. Seems to play a critical role in tuning SCN circadian period by opposing the action of CRY1. With CRY1, dispensable for circadian rhythm generation but necessary for the development of intercellular networks for rhythm synchrony. May mediate circadian regulation of cAMP signaling and gluconeogenesis by blocking glucagon-mediated increases in intracellular cAMP concentrations and in CREB1 phosphorylation. Besides its role in the maintenance of the circadian clock, is also involved in the regulation of other processes. Plays a key role in glucose and lipid metabolism modulation, in part, through the transcriptional regulation of genes involved in these pathways, such as LEP or ACSL4. Represses glucocorticoid receptor NR3C1/GR-induced transcriptional activity by binding to glucocorticoid response elements (GREs). Represses the CLOCK-BMAL1 induced transcription of BHLHE40/DEC1 and NAMPT. Represses PPARD and its target genes in the skeletal muscle and limits exercise capacity. Represses the transcriptional activity of NR1I2. The polypeptide is Cryptochrome-2 (Cry2) (Rattus norvegicus (Rat)).